We begin with the raw amino-acid sequence, 126 residues long: Aspartate 1-decarboxylase (126 aa).

The Schiff-base intermediate with substrate; via pyruvic acid role is filled by serine 25. Residue serine 25 is modified to Pyruvic acid (Ser). Threonine 57 contributes to the substrate binding site. Residue tyrosine 58 is the Proton donor of the active site. 73 to 75 (GAA) serves as a coordination point for substrate.

This sequence belongs to the PanD family. Heterooctamer of four alpha and four beta subunits. Pyruvate serves as cofactor. Post-translationally, is synthesized initially as an inactive proenzyme, which is activated by self-cleavage at a specific serine bond to produce a beta-subunit with a hydroxyl group at its C-terminus and an alpha-subunit with a pyruvoyl group at its N-terminus.

The protein resides in the cytoplasm. It carries out the reaction L-aspartate + H(+) = beta-alanine + CO2. The protein operates within cofactor biosynthesis; (R)-pantothenate biosynthesis; beta-alanine from L-aspartate: step 1/1. Functionally, catalyzes the pyruvoyl-dependent decarboxylation of aspartate to produce beta-alanine. This chain is Aspartate 1-decarboxylase, found in Psychromonas ingrahamii (strain DSM 17664 / CCUG 51855 / 37).